The sequence spans 413 residues: Clamp protein VP6 (413 aa).

It belongs to the reoviridae clamp protein family. As to quaternary structure, interacts with capsid proteins VP3, VP4 and VP7.

The protein resides in the virion. In terms of biological role, located at the interface of the incomplete T=13 outer capsid and the pseudo T=2 inner capsid, 120 VP6 subunits clamp and stabilize the inner capsid shell. The polypeptide is Clamp protein VP6 (S8) (Ctenopharyngodon idella (Grass carp)).